A 276-amino-acid chain; its full sequence is Large ribosomal subunit protein uL2 (276 aa).

A disordered region spans residues 224 to 276 (VMNPVDHPHGGGEGKAPIGRKSPMTPWGKPTLGYKTRKKKNKSDKFIIRRRKK). A compositionally biased stretch (basic residues) spans 258–276 (KTRKKKNKSDKFIIRRRKK).

It belongs to the universal ribosomal protein uL2 family. Part of the 50S ribosomal subunit. Forms a bridge to the 30S subunit in the 70S ribosome.

Its function is as follows. One of the primary rRNA binding proteins. Required for association of the 30S and 50S subunits to form the 70S ribosome, for tRNA binding and peptide bond formation. It has been suggested to have peptidyltransferase activity; this is somewhat controversial. Makes several contacts with the 16S rRNA in the 70S ribosome. The polypeptide is Large ribosomal subunit protein uL2 (Geobacillus thermodenitrificans (strain NG80-2)).